We begin with the raw amino-acid sequence, 255 residues long: MAELRALVAVKRVIDFAVKIRVKPDKTGVVTDGVKHSMNPFCEIAVEEAVRLKEKKLVKEIIAVSCGPAQCQETIRTALAMGADRGIHVEVPAAEANHLGPLQVARVLAKLAEKEKVDLVLLGKQAIDDDCNQTGQMTAGFLDWPQGTFASQVTLEGDKIKVEREIDGGLETLRLKLPAVVTADLRLNEPRYATLPNIMKAKKKKIEVIKAGDLGVDLTSKLSVISVEDPPQRTAGVKVETTEDLVAKLKEIGRI.

An N-acetylalanine modification is found at A2. AMP is bound by residues A9, 39 to 42, C66, and 123 to 134; these read NPFC and GKQAIDDDCNQT. The segment at 183–205 is recognition loop; that stretch reads ADLRLNEPRYATLPNIMKAKKKK. An N6,N6,N6-trimethyllysine; by ETFBKMT; alternate modification is found at K200. K200 is subject to N6-acetyllysine; alternate. K200 carries the post-translational modification N6-methyllysine; alternate. An N6,N6,N6-trimethyllysine; by ETFBKMT modification is found at K203. An N6-acetyllysine; alternate modification is found at K210. At K210 the chain carries N6-succinyllysine; alternate. 2 positions are modified to phosphoserine: S223 and S226. K238 bears the N6-acetyllysine mark. K248 is subject to N6-acetyllysine; alternate. K248 carries the post-translational modification N6-succinyllysine; alternate.

It belongs to the ETF beta-subunit/FixA family. Heterodimer composed of ETFA and ETFB. Identified in a complex that contains ETFA, ETFB and ETFRF1. Interacts with ACADM. Post-translationally, methylated. Trimethylation at Lys-200 and Lys-203 may negatively regulate the activity in electron transfer from acyl-CoA dehydrogenases.

Its subcellular location is the mitochondrion matrix. In terms of biological role, heterodimeric electron transfer flavoprotein that accepts electrons from several mitochondrial dehydrogenases, including acyl-CoA dehydrogenases, glutaryl-CoA and sarcosine dehydrogenase. It transfers the electrons to the main mitochondrial respiratory chain via ETF-ubiquinone oxidoreductase. Required for normal mitochondrial fatty acid oxidation and normal amino acid metabolism. ETFB binds an AMP molecule that probably has a purely structural role. The protein is Electron transfer flavoprotein subunit beta of Bos taurus (Bovine).